The chain runs to 1017 residues: Pro-apoptotic serine protease NMA111 (1017 aa).

Positions 1-46 (MDQNGASTEARSKRKQPPTSPSTDRPLKQIKPEVDAHTRNGVPKSP) are disordered. Basic and acidic residues predominate over residues 25–38 (RPLKQIKPEVDAHT). Positions 88–278 (VVSIHFCQTC…LPLDRPLRAL (191 aa)) are serine protease. Catalysis depends on charge relay system residues H126, D157, and S239. 2 consecutive PDZ domains span residues 305–383 (RRLG…QRAG) and 879–960 (SFCG…MTFD).

Belongs to the peptidase S1C family.

It localises to the nucleus. Functionally, nuclear serine protease which mediates apoptosis. In Phaeosphaeria nodorum (strain SN15 / ATCC MYA-4574 / FGSC 10173) (Glume blotch fungus), this protein is Pro-apoptotic serine protease NMA111 (NMA111).